A 241-amino-acid chain; its full sequence is Xyloglucan-specific endo-beta-1,4-glucanase 1 (241 aa).

The N-terminal stretch at 1–19 (MKGLLAGTIAAATFAVASA) is a signal peptide. Residue Glu-136 is part of the active site. N-linked (GlcNAc...) asparagine glycans are attached at residues Asn-174 and Asn-190. Glu-222 is an active-site residue.

Belongs to the glycosyl hydrolase 12 (cellulase H) family. In terms of assembly, interacts with host apoplastic glucanase inhibitor GIP2.

It carries out the reaction xyloglucan + H2O = xyloglucan oligosaccharides.. The xyloglucanase activity is inhibited by the binding of the host apoplastic glucanase inhibitor GIP2. Glycoside hydrolase that exhibits xyloglucanase activity. Acts as an important virulence factor during P.parasitica infection of its host Nicotiana benthamiana. Also acts as a pathogen-associated molecular pattern (PAMP) in host species, where it can trigger defense responses including cell death. The PAMP activity is independent of its xyloglucanase activity. With paralog XLP1, is required to elevate apoplastic sugar during P.parasitica infection. The polypeptide is Xyloglucan-specific endo-beta-1,4-glucanase 1 (Phytophthora nicotianae (strain INRA-310) (Phytophthora parasitica)).